We begin with the raw amino-acid sequence, 508 residues long: ATP synthase subunit alpha, mitochondrial (508 aa).

171–178 provides a ligand contact to ATP; the sequence is GDRQTGKT.

The protein belongs to the ATPase alpha/beta chains family. As to quaternary structure, F-type ATPases have 2 components, CF(1) - the catalytic core - and CF(0) - the membrane proton channel. CF(1) has five subunits: alpha(3), beta(3), gamma(1), delta(1), epsilon(1). CF(0) has three main subunits: a, b and c.

It is found in the mitochondrion. Its subcellular location is the mitochondrion inner membrane. In terms of biological role, mitochondrial membrane ATP synthase (F(1)F(0) ATP synthase or Complex V) produces ATP from ADP in the presence of a proton gradient across the membrane which is generated by electron transport complexes of the respiratory chain. F-type ATPases consist of two structural domains, F(1) - containing the extramembraneous catalytic core, and F(0) - containing the membrane proton channel, linked together by a central stalk and a peripheral stalk. During catalysis, ATP synthesis in the catalytic domain of F(1) is coupled via a rotary mechanism of the central stalk subunits to proton translocation. Subunits alpha and beta form the catalytic core in F(1). Rotation of the central stalk against the surrounding alpha(3)beta(3) subunits leads to hydrolysis of ATP in three separate catalytic sites on the beta subunits. Subunit alpha does not bear the catalytic high-affinity ATP-binding sites. In Zea mays (Maize), this protein is ATP synthase subunit alpha, mitochondrial (ATPA).